Consider the following 683-residue polypeptide: Methionine--tRNA ligase (683 aa).

Positions 15–25 (PYANGSIHLGH) match the 'HIGH' region motif. Cys-146, Cys-149, Cys-159, and Cys-162 together coordinate Zn(2+). The short motif at 332–336 (KMSKS) is the 'KMSKS' region element. Lys-335 lines the ATP pocket. Residues 582–683 (DFAKVDLRIA…QGAQAGMRVM (102 aa)) enclose the tRNA-binding domain.

It belongs to the class-I aminoacyl-tRNA synthetase family. MetG type 1 subfamily. As to quaternary structure, homodimer. Zn(2+) serves as cofactor.

It is found in the cytoplasm. It carries out the reaction tRNA(Met) + L-methionine + ATP = L-methionyl-tRNA(Met) + AMP + diphosphate. In terms of biological role, is required not only for elongation of protein synthesis but also for the initiation of all mRNA translation through initiator tRNA(fMet) aminoacylation. The polypeptide is Methionine--tRNA ligase (Vibrio cholerae serotype O1 (strain ATCC 39315 / El Tor Inaba N16961)).